The primary structure comprises 132 residues: UPF0102 protein Ajs_0414 (132 aa).

The interval 1–23 (MGFLGKKVNGSAPARTTRAAGQA) is disordered.

This sequence belongs to the UPF0102 family.

The sequence is that of UPF0102 protein Ajs_0414 from Acidovorax sp. (strain JS42).